The following is a 151-amino-acid chain: High mobility group B protein 14 (151 aa).

Disordered regions lie at residues 1 to 62 (MTKR…QTKM) and 132 to 151 (TKRMESGAHDESETDSDYSE). Low complexity predominate over residues 7 to 20 (KSGPLSPSCSGGSS). Over residues 35–56 (RSTRLRLQPLRKPKTSPKKKPV) the composition is skewed to basic residues. Residues 63–132 (PKKPATAFFF…EFHRAMTEYT (70 aa)) constitute a DNA-binding region (HMG box). Residues 132–142 (TKRMESGAHDE) show a composition bias toward basic and acidic residues. Residue Ser-150 is modified to Phosphoserine.

The protein belongs to the HMGB family.

Its subcellular location is the nucleus. This is High mobility group B protein 14 (HMGB14) from Arabidopsis thaliana (Mouse-ear cress).